The primary structure comprises 314 residues: Quinolinate synthase (314 aa).

H27 and S44 together coordinate iminosuccinate. Position 89 (C89) interacts with [4Fe-4S] cluster. Iminosuccinate contacts are provided by residues 115 to 117 (YIN) and S132. C175 provides a ligand contact to [4Fe-4S] cluster. Residues 201–203 (HPE) and T218 each bind iminosuccinate. C271 lines the [4Fe-4S] cluster pocket.

It belongs to the quinolinate synthase family. Type 2 subfamily. [4Fe-4S] cluster is required as a cofactor.

The protein localises to the cytoplasm. The enzyme catalyses iminosuccinate + dihydroxyacetone phosphate = quinolinate + phosphate + 2 H2O + H(+). It participates in cofactor biosynthesis; NAD(+) biosynthesis; quinolinate from iminoaspartate: step 1/1. In terms of biological role, catalyzes the condensation of iminoaspartate with dihydroxyacetone phosphate to form quinolinate. The protein is Quinolinate synthase of Ehrlichia chaffeensis (strain ATCC CRL-10679 / Arkansas).